A 206-amino-acid chain; its full sequence is Small ribosomal subunit protein uS4 (206 aa).

One can recognise an S4 RNA-binding domain in the interval 96–156 (TRLDNVVYRM…EKSRTQARIK (61 aa)).

It belongs to the universal ribosomal protein uS4 family. In terms of assembly, part of the 30S ribosomal subunit. Contacts protein S5. The interaction surface between S4 and S5 is involved in control of translational fidelity.

Its function is as follows. One of the primary rRNA binding proteins, it binds directly to 16S rRNA where it nucleates assembly of the body of the 30S subunit. Functionally, with S5 and S12 plays an important role in translational accuracy. In Shewanella denitrificans (strain OS217 / ATCC BAA-1090 / DSM 15013), this protein is Small ribosomal subunit protein uS4.